The chain runs to 82 residues: Large ribosomal subunit protein uL23 (82 aa).

Belongs to the universal ribosomal protein uL23 family. Part of the 50S ribosomal subunit. Contacts protein L29.

Binds to 23S rRNA. One of the proteins that surrounds the polypeptide exit tunnel on the outside of the ribosome. The polypeptide is Large ribosomal subunit protein uL23 (Natronomonas pharaonis (strain ATCC 35678 / DSM 2160 / CIP 103997 / JCM 8858 / NBRC 14720 / NCIMB 2260 / Gabara) (Halobacterium pharaonis)).